The chain runs to 353 residues: Quinolinate synthase (353 aa).

2 residues coordinate iminosuccinate: H47 and S68. C113 provides a ligand contact to [4Fe-4S] cluster. Residues 139–141 and S156 contribute to the iminosuccinate site; that span reads YAN. Residue C200 participates in [4Fe-4S] cluster binding. Iminosuccinate is bound by residues 226-228 and T243; that span reads HPE. Position 297 (C297) interacts with [4Fe-4S] cluster.

It belongs to the quinolinate synthase family. Type 1 subfamily. [4Fe-4S] cluster is required as a cofactor.

It is found in the cytoplasm. The catalysed reaction is iminosuccinate + dihydroxyacetone phosphate = quinolinate + phosphate + 2 H2O + H(+). The protein operates within cofactor biosynthesis; NAD(+) biosynthesis; quinolinate from iminoaspartate: step 1/1. Its function is as follows. Catalyzes the condensation of iminoaspartate with dihydroxyacetone phosphate to form quinolinate. This Yersinia pestis bv. Antiqua (strain Antiqua) protein is Quinolinate synthase.